The primary structure comprises 380 residues: Succinyl-diaminopimelate desuccinylase (380 aa).

Position 66 (His66) interacts with Zn(2+). The active site involves Asp68. Position 99 (Asp99) interacts with Zn(2+). The Proton acceptor role is filled by Glu135. Positions 136, 164, and 350 each coordinate Zn(2+).

The protein belongs to the peptidase M20A family. DapE subfamily. Homodimer. The cofactor is Zn(2+). Co(2+) is required as a cofactor.

The catalysed reaction is N-succinyl-(2S,6S)-2,6-diaminopimelate + H2O = (2S,6S)-2,6-diaminopimelate + succinate. It functions in the pathway amino-acid biosynthesis; L-lysine biosynthesis via DAP pathway; LL-2,6-diaminopimelate from (S)-tetrahydrodipicolinate (succinylase route): step 3/3. In terms of biological role, catalyzes the hydrolysis of N-succinyl-L,L-diaminopimelic acid (SDAP), forming succinate and LL-2,6-diaminopimelate (DAP), an intermediate involved in the bacterial biosynthesis of lysine and meso-diaminopimelic acid, an essential component of bacterial cell walls. The protein is Succinyl-diaminopimelate desuccinylase of Magnetococcus marinus (strain ATCC BAA-1437 / JCM 17883 / MC-1).